Here is a 122-residue protein sequence, read N- to C-terminus: Small ribosomal subunit protein uS13 (122 aa).

A disordered region spans residues 92–122 (HRNGLPVRGQRTHTNARTRKGKAKPIAGKKK). Residues 101-122 (QRTHTNARTRKGKAKPIAGKKK) show a composition bias toward basic residues.

Belongs to the universal ribosomal protein uS13 family. As to quaternary structure, part of the 30S ribosomal subunit. Forms a loose heterodimer with protein S19. Forms two bridges to the 50S subunit in the 70S ribosome.

Located at the top of the head of the 30S subunit, it contacts several helices of the 16S rRNA. In the 70S ribosome it contacts the 23S rRNA (bridge B1a) and protein L5 of the 50S subunit (bridge B1b), connecting the 2 subunits; these bridges are implicated in subunit movement. Contacts the tRNAs in the A and P-sites. In Erythrobacter litoralis (strain HTCC2594), this protein is Small ribosomal subunit protein uS13.